The following is a 184-amino-acid chain: Large ribosomal subunit protein uL6 (184 aa).

Belongs to the universal ribosomal protein uL6 family. In terms of assembly, part of the 50S ribosomal subunit.

Its function is as follows. This protein binds to the 23S rRNA, and is important in its secondary structure. It is located near the subunit interface in the base of the L7/L12 stalk, and near the tRNA binding site of the peptidyltransferase center. This Thermococcus gammatolerans (strain DSM 15229 / JCM 11827 / EJ3) protein is Large ribosomal subunit protein uL6.